We begin with the raw amino-acid sequence, 212 residues long: FMN-dependent NADH:quinone oxidoreductase (212 aa).

FMN contacts are provided by residues serine 9, 15-17, and 138-141; these read SVS and TRGG.

It belongs to the azoreductase type 1 family. Homodimer. Requires FMN as cofactor.

The catalysed reaction is 2 a quinone + NADH + H(+) = 2 a 1,4-benzosemiquinone + NAD(+). The enzyme catalyses N,N-dimethyl-1,4-phenylenediamine + anthranilate + 2 NAD(+) = 2-(4-dimethylaminophenyl)diazenylbenzoate + 2 NADH + 2 H(+). In terms of biological role, quinone reductase that provides resistance to thiol-specific stress caused by electrophilic quinones. Functionally, also exhibits azoreductase activity. Catalyzes the reductive cleavage of the azo bond in aromatic azo compounds to the corresponding amines. This chain is FMN-dependent NADH:quinone oxidoreductase, found in Delftia acidovorans (strain DSM 14801 / SPH-1).